The chain runs to 127 residues: Aspartate 1-decarboxylase (127 aa).

Ser-25 acts as the Schiff-base intermediate with substrate; via pyruvic acid in catalysis. Ser-25 carries the pyruvic acid (Ser) modification. Substrate is bound at residue Thr-57. The active-site Proton donor is Tyr-58. 73 to 75 is a binding site for substrate; that stretch reads GAA.

This sequence belongs to the PanD family. As to quaternary structure, heterooctamer of four alpha and four beta subunits. Pyruvate is required as a cofactor. In terms of processing, is synthesized initially as an inactive proenzyme, which is activated by self-cleavage at a specific serine bond to produce a beta-subunit with a hydroxyl group at its C-terminus and an alpha-subunit with a pyruvoyl group at its N-terminus.

It is found in the cytoplasm. The enzyme catalyses L-aspartate + H(+) = beta-alanine + CO2. It participates in cofactor biosynthesis; (R)-pantothenate biosynthesis; beta-alanine from L-aspartate: step 1/1. Functionally, catalyzes the pyruvoyl-dependent decarboxylation of aspartate to produce beta-alanine. This Bacillus cereus (strain 03BB102) protein is Aspartate 1-decarboxylase.